Consider the following 239-residue polypeptide: MTQPISSALVLFSGGQDSATCLAWALDRFDRVETIGFDYGQRHAIELACRPKVRAAIRQMSPVWAEKLGEDHMIDAGVLKSLGATAMTHEVEISMTAAGLPNTFVPGRNLLFFTLAGALAVRRGIGVLVGGMCETDYSGYPDCRADTLKAQEQTLRLGLDADIRIDAPLMYLDKAATWQLAQELGGDALVALIGEETHTCYLGERGARHDWGYGCGTCPACELRSNGWQRWQDGKAAAP.

An ATP-binding site is contributed by 12–22; sequence FSGGQDSATCL. Zn(2+) contacts are provided by Cys200, Cys215, Cys218, and Cys221.

It belongs to the QueC family. Zn(2+) is required as a cofactor.

The catalysed reaction is 7-carboxy-7-deazaguanine + NH4(+) + ATP = 7-cyano-7-deazaguanine + ADP + phosphate + H2O + H(+). The protein operates within purine metabolism; 7-cyano-7-deazaguanine biosynthesis. Catalyzes the ATP-dependent conversion of 7-carboxy-7-deazaguanine (CDG) to 7-cyano-7-deazaguanine (preQ(0)). The chain is 7-cyano-7-deazaguanine synthase from Hyphomonas neptunium (strain ATCC 15444).